The following is a 70-amino-acid chain: Translational regulator CsrA (70 aa).

The protein belongs to the CsrA/RsmA family. In terms of assembly, homodimer; the beta-strands of each monomer intercalate to form a hydrophobic core, while the alpha-helices form wings that extend away from the core.

It localises to the cytoplasm. Functionally, a translational regulator that binds mRNA to regulate translation initiation and/or mRNA stability. Usually binds in the 5'-UTR at or near the Shine-Dalgarno sequence preventing ribosome-binding, thus repressing translation. Its main target seems to be the major flagellin gene, while its function is anatagonized by FliW. The sequence is that of Translational regulator CsrA from Clostridioides difficile (strain 630) (Peptoclostridium difficile).